A 424-amino-acid chain; its full sequence is MIDIRLIREKPDFVKKALEKRNYEKKMVDDLLSLDAQFRELTNQINQLRAQRNSISKMVAQAKSSGKTEEIENLTEEGKKIGRQIDSIEDQLKEIKVQMEKLMLLVPNIPDDSVPEGKDETSNREIRKWGDPKKFDYNPQAHWDLGPSLGLMDFDRAAKLSGSRFTVMYGMFAKLERALTNFMLDMHTKEHGYTEVWLPHIVKRETMTITGQLPKFEEEAYRIEADDLFLIPTAEVPLVALRSNEILEEKDLPLLYTAYTPCYRREAGSYGKDVRGMIRQHQFDKVELVWITTPERSFEDLETLVSHAEEVLRRLELPYRVIQLCSGDLGFGAAKTYDLEVWLPSYNSYKEISSCSNDTDFQARRGNIRYRRKDGKISFVHTLNGSGVAVGRTLVAIIENYQRADGRIDVPKALQPYLGCEVLG.

233–235 (TAE) is a binding site for L-serine. 264 to 266 (RRE) provides a ligand contact to ATP. Glutamate 287 is an L-serine binding site. 351–354 (EISS) is an ATP binding site. Serine 386 provides a ligand contact to L-serine.

Belongs to the class-II aminoacyl-tRNA synthetase family. Type-1 seryl-tRNA synthetase subfamily. In terms of assembly, homodimer. The tRNA molecule binds across the dimer.

Its subcellular location is the cytoplasm. It carries out the reaction tRNA(Ser) + L-serine + ATP = L-seryl-tRNA(Ser) + AMP + diphosphate + H(+). The enzyme catalyses tRNA(Sec) + L-serine + ATP = L-seryl-tRNA(Sec) + AMP + diphosphate + H(+). It participates in aminoacyl-tRNA biosynthesis; selenocysteinyl-tRNA(Sec) biosynthesis; L-seryl-tRNA(Sec) from L-serine and tRNA(Sec): step 1/1. Its function is as follows. Catalyzes the attachment of serine to tRNA(Ser). Is also able to aminoacylate tRNA(Sec) with serine, to form the misacylated tRNA L-seryl-tRNA(Sec), which will be further converted into selenocysteinyl-tRNA(Sec). This is Serine--tRNA ligase from Pseudothermotoga lettingae (strain ATCC BAA-301 / DSM 14385 / NBRC 107922 / TMO) (Thermotoga lettingae).